A 501-amino-acid polypeptide reads, in one-letter code: Lysine--tRNA ligase (501 aa).

Mg(2+)-binding residues include E412 and E419.

This sequence belongs to the class-II aminoacyl-tRNA synthetase family. Homodimer. Mg(2+) serves as cofactor.

The protein localises to the cytoplasm. The catalysed reaction is tRNA(Lys) + L-lysine + ATP = L-lysyl-tRNA(Lys) + AMP + diphosphate. This is Lysine--tRNA ligase (lysS) from Pasteurella multocida (strain Pm70).